A 91-amino-acid polypeptide reads, in one-letter code: Acylphosphatase (91 aa).

Residues 3 to 91 (TVTMKVTGLV…EKFTRFSVVY (89 aa)) enclose the Acylphosphatase-like domain. Active-site residues include arginine 18 and asparagine 36.

Belongs to the acylphosphatase family.

The enzyme catalyses an acyl phosphate + H2O = a carboxylate + phosphate + H(+). The chain is Acylphosphatase (acyP) from Lactobacillus gasseri (strain ATCC 33323 / DSM 20243 / BCRC 14619 / CIP 102991 / JCM 1131 / KCTC 3163 / NCIMB 11718 / NCTC 13722 / AM63).